The primary structure comprises 402 residues: Probable sugar efflux transporter (402 aa).

Transmembrane regions (helical) follow at residues 15–35, 51–71, 84–104, 109–129, 137–157, 168–188, 209–229, 245–265, 276–296, 297–317, 333–353, and 365–385; these read VLIM…PVAM, GLMM…AMLA, LFII…FWIL, MCIA…VMRI, QALG…LPIG, VTFG…IRLL, PLLL…FTAY, NFAT…SLLF, FIVV…FSTE, AIIA…CIGL, VATA…ALFG, and IGYT…TTHL.

This sequence belongs to the major facilitator superfamily. SotB (TC 2.A.1.2) family.

It is found in the cell inner membrane. Functionally, involved in the efflux of sugars. The physiological role may be the reduction of the intracellular concentration of toxic sugars or sugar metabolites. The sequence is that of Probable sugar efflux transporter from Haemophilus influenzae (strain 86-028NP).